We begin with the raw amino-acid sequence, 223 residues long: Serum amyloid P-component (223 aa).

A signal peptide spans 1 to 19 (MDKMLFWVSVFTIFLDVFA). The Pentraxin (PTX) domain occupies 24-223 (DKKVFVFPRE…YVIIKPRVWD (200 aa)). Cysteines 55 and 114 form a disulfide. Ca(2+)-binding residues include Asp77, Asn78, Glu155, Gln156, Asp157, and Gln167. A glycan (N-linked (GlcNAc...) asparagine) is linked at Asn198.

It belongs to the pentraxin family. In terms of assembly, homopentamer. Pentraxin (or pentaxin) have a discoid arrangement of 5 non-covalently bound subunits. It depends on Ca(2+) as a cofactor.

It localises to the secreted. This Cavia porcellus (Guinea pig) protein is Serum amyloid P-component (PTX2).